Reading from the N-terminus, the 472-residue chain is 3-isopropylmalate dehydratase large subunit (472 aa).

[4Fe-4S] cluster-binding residues include cysteine 353, cysteine 414, and cysteine 417.

It belongs to the aconitase/IPM isomerase family. LeuC type 1 subfamily. Heterodimer of LeuC and LeuD. Requires [4Fe-4S] cluster as cofactor.

The catalysed reaction is (2R,3S)-3-isopropylmalate = (2S)-2-isopropylmalate. It participates in amino-acid biosynthesis; L-leucine biosynthesis; L-leucine from 3-methyl-2-oxobutanoate: step 2/4. In terms of biological role, catalyzes the isomerization between 2-isopropylmalate and 3-isopropylmalate, via the formation of 2-isopropylmaleate. The sequence is that of 3-isopropylmalate dehydratase large subunit from Acinetobacter baumannii (strain ACICU).